Reading from the N-terminus, the 698-residue chain is Elongation factor G 1 (698 aa).

The region spanning 8 to 290 (ERYRNIGICA…AVVEFLPAPV (283 aa)) is the tr-type G domain. Residues 17 to 24 (AHVDAGKT), 88 to 92 (DTPGH), and 142 to 145 (NKMD) contribute to the GTP site.

It belongs to the TRAFAC class translation factor GTPase superfamily. Classic translation factor GTPase family. EF-G/EF-2 subfamily.

The protein resides in the cytoplasm. Catalyzes the GTP-dependent ribosomal translocation step during translation elongation. During this step, the ribosome changes from the pre-translocational (PRE) to the post-translocational (POST) state as the newly formed A-site-bound peptidyl-tRNA and P-site-bound deacylated tRNA move to the P and E sites, respectively. Catalyzes the coordinated movement of the two tRNA molecules, the mRNA and conformational changes in the ribosome. In Shewanella sp. (strain MR-4), this protein is Elongation factor G 1.